Here is a 458-residue protein sequence, read N- to C-terminus: Argininosuccinate lyase (458 aa).

Belongs to the lyase 1 family. Argininosuccinate lyase subfamily.

It is found in the cytoplasm. The catalysed reaction is 2-(N(omega)-L-arginino)succinate = fumarate + L-arginine. It participates in amino-acid biosynthesis; L-arginine biosynthesis; L-arginine from L-ornithine and carbamoyl phosphate: step 3/3. In Salmonella heidelberg (strain SL476), this protein is Argininosuccinate lyase.